Here is a 561-residue protein sequence, read N- to C-terminus: MSDNNRSRHITEGVARAPNRAMYYALGYTEADFQNPMIGVANGHSTITPCNSGLQRLADAAIEAIRVSRANPQVFGTPTISDGMSMGTEGMKYSLVSREVIADCIETAAQGQWMDGVVVIGGCDKNMPGGMMALARMNVPGIYVYGGTIKPGHYKGKDLTIVSVFEAVGEYTMGRMDETDFKAIEQCAIPGSGSCGGMYTANTMSSAFEAMGMSLPHSSTMANEDQEKVASAAESARVLVEAVRRQLRPRDIITRASIENAVAVIMATGGSTNAVLHFLAIAHAAEVPWNIDDFERIRKRVPVICDLKPSGKYVATDLHRAGGIPQVMKILLNAGLLHGDCITITGKTVAETLANVPDAPPPGQDVIMPIERALYPQGHLAILKGNLSPEGCVAKITGLKNPVITGPARVFDSEDDAMSAIMDRRIRDGDVVVIRYEGPKGGPGMREMLAPTSALVGQGLGETVGLITDGRFSGGTWGMVVGHVAPEAFVGGPIALIREGDSVTIDAHQLLLQLNISDEEMAARRKAWAQPKPRYVRGVLAKFGKLACTASRGAVTDAFEE.

Cysteine 50 serves as a coordination point for [2Fe-2S] cluster. A Mg(2+)-binding site is contributed by aspartate 82. Cysteine 123 is a [2Fe-2S] cluster binding site. Mg(2+) is bound by residues aspartate 124 and lysine 125. Lysine 125 bears the N6-carboxylysine mark. Cysteine 195 is a binding site for [2Fe-2S] cluster. A Mg(2+)-binding site is contributed by glutamate 447. Serine 473 (proton acceptor) is an active-site residue.

The protein belongs to the IlvD/Edd family. Homodimer. Requires [2Fe-2S] cluster as cofactor. The cofactor is Mg(2+).

It catalyses the reaction (2R)-2,3-dihydroxy-3-methylbutanoate = 3-methyl-2-oxobutanoate + H2O. The enzyme catalyses (2R,3R)-2,3-dihydroxy-3-methylpentanoate = (S)-3-methyl-2-oxopentanoate + H2O. The protein operates within amino-acid biosynthesis; L-isoleucine biosynthesis; L-isoleucine from 2-oxobutanoate: step 3/4. It participates in amino-acid biosynthesis; L-valine biosynthesis; L-valine from pyruvate: step 3/4. Functions in the biosynthesis of branched-chain amino acids. Catalyzes the dehydration of (2R,3R)-2,3-dihydroxy-3-methylpentanoate (2,3-dihydroxy-3-methylvalerate) into 2-oxo-3-methylpentanoate (2-oxo-3-methylvalerate) and of (2R)-2,3-dihydroxy-3-methylbutanoate (2,3-dihydroxyisovalerate) into 2-oxo-3-methylbutanoate (2-oxoisovalerate), the penultimate precursor to L-isoleucine and L-valine, respectively. This Bordetella bronchiseptica (strain ATCC BAA-588 / NCTC 13252 / RB50) (Alcaligenes bronchisepticus) protein is Dihydroxy-acid dehydratase 3.